Here is a 310-residue protein sequence, read N- to C-terminus: Methionyl-tRNA formyltransferase (310 aa).

Residue 109 to 112 (SLLP) participates in (6S)-5,6,7,8-tetrahydrofolate binding.

This sequence belongs to the Fmt family.

The enzyme catalyses L-methionyl-tRNA(fMet) + (6R)-10-formyltetrahydrofolate = N-formyl-L-methionyl-tRNA(fMet) + (6S)-5,6,7,8-tetrahydrofolate + H(+). Its function is as follows. Attaches a formyl group to the free amino group of methionyl-tRNA(fMet). The formyl group appears to play a dual role in the initiator identity of N-formylmethionyl-tRNA by promoting its recognition by IF2 and preventing the misappropriation of this tRNA by the elongation apparatus. This Pseudomonas putida (strain GB-1) protein is Methionyl-tRNA formyltransferase.